A 230-amino-acid chain; its full sequence is Small ribosomal subunit protein uS3c (230 aa).

The 71-residue stretch at 39 to 109 (IRSFIHGKLS…QIRVNVVEIS (71 aa)) folds into the KH type-2 domain.

It belongs to the universal ribosomal protein uS3 family. In terms of assembly, part of the 30S ribosomal subunit.

It is found in the plastid. It localises to the chloroplast. This Porphyra purpurea (Red seaweed) protein is Small ribosomal subunit protein uS3c (rps3).